The sequence spans 1547 residues: DNA topoisomerase 2 (1547 aa).

The tract at residues 8–30 (FNKMSSPKQNGTGEPAPAKGQKG) is disordered. The span at 9–19 (NKMSSPKQNGT) shows a compositional bias: polar residues. Residues asparagine 99, asparagine 128, 156–158 (SSN), and 169–176 (GRNGYGAK) contribute to the ATP site. The interval 351–353 (KKK) is interaction with DNA. An ATP-binding site is contributed by 385-387 (QTK). In terms of domain architecture, Toprim spans 463 to 580 (CTLILTEGDS…ELLKLPFLEE (118 aa)). Mg(2+) contacts are provided by glutamate 469, aspartate 549, and aspartate 551. The 470-residue stretch at 723 to 1192 (IPSMIDGLKP…TAPMLWREDL (470 aa)) folds into the Topo IIA-type catalytic domain. Tyrosine 813 serves as the catalytic O-(5'-phospho-DNA)-tyrosine intermediate. The tract at residues 996 to 1005 (KLQTTISMTC) is interaction with DNA. Disordered regions lie at residues 1107 to 1134 (TALE…VDPD), 1209 to 1249 (EELN…ISDD), 1261 to 1423 (KTRK…MDSD), and 1459 to 1547 (RQRR…SLSD). Residues 1109-1123 (LEDDDAQESEEEEPE) show a composition bias toward acidic residues. Basic and acidic residues predominate over residues 1124–1134 (PDPKGKPVDPD). Residues 1216–1228 (KTSKAMAGKKNRK) are compositionally biased toward basic residues. Basic and acidic residues-rich tracts occupy residues 1238–1249 (NGRRVEPKISDD) and 1294–1315 (EKPE…DGLK). Over residues 1331 to 1344 (TFSGSSSGEMSASD) the composition is skewed to low complexity. Acidic residues predominate over residues 1373–1383 (DDSGSDSEPEL). 2 stretches are compositionally biased toward basic and acidic residues: residues 1384 to 1394 (LDNKIDSDHEA) and 1459 to 1488 (RQRR…DEKK). A compositionally biased stretch (basic residues) spans 1513–1528 (KGKKKTAANPKKKAKK). Positions 1537 to 1547 (DFNISDSSLSD) are enriched in polar residues.

It belongs to the type II topoisomerase family. Homodimer. It depends on Mg(2+) as a cofactor. The cofactor is Mn(2+). Requires Ca(2+) as cofactor.

The protein resides in the nucleus. It catalyses the reaction ATP-dependent breakage, passage and rejoining of double-stranded DNA.. Control of topological states of DNA by transient breakage and subsequent rejoining of DNA strands. Topoisomerase II makes double-strand breaks. This is DNA topoisomerase 2 (TOP2) from Bombyx mori (Silk moth).